A 186-amino-acid chain; its full sequence is Putative thiamine-phosphate synthase 2 (186 aa).

Residues 35-39 and N67 contribute to the 4-amino-2-methyl-5-(diphosphooxymethyl)pyrimidine site; that span reads QLREK. E68 is a binding site for Mg(2+). Residue S105 coordinates 4-amino-2-methyl-5-(diphosphooxymethyl)pyrimidine. 131–133 is a 2-[(2R,5Z)-2-carboxy-4-methylthiazol-5(2H)-ylidene]ethyl phosphate binding site; sequence TSS. Residue H134 participates in 4-amino-2-methyl-5-(diphosphooxymethyl)pyrimidine binding. 2-[(2R,5Z)-2-carboxy-4-methylthiazol-5(2H)-ylidene]ethyl phosphate contacts are provided by residues G161 and 181 to 182; that span reads IS.

It belongs to the thiamine-phosphate synthase family. Mg(2+) is required as a cofactor.

The catalysed reaction is 2-[(2R,5Z)-2-carboxy-4-methylthiazol-5(2H)-ylidene]ethyl phosphate + 4-amino-2-methyl-5-(diphosphooxymethyl)pyrimidine + 2 H(+) = thiamine phosphate + CO2 + diphosphate. The enzyme catalyses 2-(2-carboxy-4-methylthiazol-5-yl)ethyl phosphate + 4-amino-2-methyl-5-(diphosphooxymethyl)pyrimidine + 2 H(+) = thiamine phosphate + CO2 + diphosphate. It catalyses the reaction 4-methyl-5-(2-phosphooxyethyl)-thiazole + 4-amino-2-methyl-5-(diphosphooxymethyl)pyrimidine + H(+) = thiamine phosphate + diphosphate. It functions in the pathway cofactor biosynthesis; thiamine diphosphate biosynthesis; thiamine phosphate from 4-amino-2-methyl-5-diphosphomethylpyrimidine and 4-methyl-5-(2-phosphoethyl)-thiazole: step 1/1. Condenses 4-methyl-5-(beta-hydroxyethyl)thiazole monophosphate (THZ-P) and 2-methyl-4-amino-5-hydroxymethyl pyrimidine pyrophosphate (HMP-PP) to form thiamine monophosphate (TMP). The protein is Putative thiamine-phosphate synthase 2 (thiE2) of Aquifex aeolicus (strain VF5).